We begin with the raw amino-acid sequence, 50 residues long: MPRDIITLGCTECKQRNYTTTKNKKNTPQKLEFNKYCRFCQKHTLHKETK.

The protein belongs to the bacterial ribosomal protein bL33 family.

This is Large ribosomal subunit protein bL33 from Citrifermentans bemidjiense (strain ATCC BAA-1014 / DSM 16622 / JCM 12645 / Bem) (Geobacter bemidjiensis).